A 98-amino-acid chain; its full sequence is Putative septation protein SpoVG (98 aa).

This sequence belongs to the SpoVG family.

Functionally, essential for sporulation. Interferes with or is a negative regulator of the pathway leading to asymmetric septation. This is Putative septation protein SpoVG from Bacillus pumilus (strain SAFR-032).